Reading from the N-terminus, the 358-residue chain is MIRKRLIIVAGGTGGHIFPGLAIANNMITQGWDVRWLGTKNRIEADLVPKHGITTYFLSIYGYGLHGKKQKILAIVSILQAVLQSYYIMRKWRPDIVLGMGGYISGPCGLAAWMCKIPLVIHEQNRVTGLTNYYLSKFAKKVLQAFPSVFPNANVVGNPIRKEILAVIEPSLRLCNRTGPIRILVIGGSQGSKIINQILPVVAAQLAGKYVFWHQVGKGALKEVQQVYTSMLKNQLNYKLVEFIDDIAIAYAWADVVICRSGALTISEIAAVGLPAIFVPFMHKDRHQYWNALPLEQLGAAKILEQPNFTAEKVSQILMSWDRSKLFTMAQRARTIAMVDSTERVTSELIELANNTKH.

UDP-N-acetyl-alpha-D-glucosamine contacts are provided by residues 13 to 15, asparagine 125, arginine 161, serine 189, isoleucine 244, and glutamine 288; that span reads TGG.

The protein belongs to the glycosyltransferase 28 family. MurG subfamily.

Its subcellular location is the cell membrane. The enzyme catalyses di-trans,octa-cis-undecaprenyl diphospho-N-acetyl-alpha-D-muramoyl-L-alanyl-D-glutamyl-meso-2,6-diaminopimeloyl-D-alanyl-D-alanine + UDP-N-acetyl-alpha-D-glucosamine = di-trans,octa-cis-undecaprenyl diphospho-[N-acetyl-alpha-D-glucosaminyl-(1-&gt;4)]-N-acetyl-alpha-D-muramoyl-L-alanyl-D-glutamyl-meso-2,6-diaminopimeloyl-D-alanyl-D-alanine + UDP + H(+). It functions in the pathway cell wall biogenesis; peptidoglycan biosynthesis. Its function is as follows. Cell wall formation. Catalyzes the transfer of a GlcNAc subunit on undecaprenyl-pyrophosphoryl-MurNAc-pentapeptide (lipid intermediate I) to form undecaprenyl-pyrophosphoryl-MurNAc-(pentapeptide)GlcNAc (lipid intermediate II). The protein is UDP-N-acetylglucosamine--N-acetylmuramyl-(pentapeptide) pyrophosphoryl-undecaprenol N-acetylglucosamine transferase of Baumannia cicadellinicola subsp. Homalodisca coagulata.